A 448-amino-acid chain; its full sequence is Phosphoglucosamine mutase (448 aa).

S100 acts as the Phosphoserine intermediate in catalysis. Mg(2+) is bound by residues S100, D240, D242, and D244. S100 is modified (phosphoserine).

This sequence belongs to the phosphohexose mutase family. Requires Mg(2+) as cofactor. Activated by phosphorylation.

The enzyme catalyses alpha-D-glucosamine 1-phosphate = D-glucosamine 6-phosphate. Functionally, catalyzes the conversion of glucosamine-6-phosphate to glucosamine-1-phosphate. The chain is Phosphoglucosamine mutase from Bacillus licheniformis (strain ATCC 14580 / DSM 13 / JCM 2505 / CCUG 7422 / NBRC 12200 / NCIMB 9375 / NCTC 10341 / NRRL NRS-1264 / Gibson 46).